A 338-amino-acid chain; its full sequence is Ketol-acid reductoisomerase (NADP(+)) (338 aa).

The KARI N-terminal Rossmann domain occupies 1 to 181 (MKVYYDKDAD…GGTRGGVIET (181 aa)). Residues 24–27 (YGSQ), Arg-47, and Ser-52 each bind NADP(+). His-107 is an active-site residue. Gly-133 contributes to the NADP(+) binding site. The KARI C-terminal knotted domain occupies 182–327 (TFKEETETDL…SRLRDMMPWI (146 aa)). Positions 190, 194, 226, and 230 each coordinate Mg(2+). Ser-251 provides a ligand contact to substrate.

It belongs to the ketol-acid reductoisomerase family. The cofactor is Mg(2+).

It catalyses the reaction (2R)-2,3-dihydroxy-3-methylbutanoate + NADP(+) = (2S)-2-acetolactate + NADPH + H(+). It carries out the reaction (2R,3R)-2,3-dihydroxy-3-methylpentanoate + NADP(+) = (S)-2-ethyl-2-hydroxy-3-oxobutanoate + NADPH + H(+). The protein operates within amino-acid biosynthesis; L-isoleucine biosynthesis; L-isoleucine from 2-oxobutanoate: step 2/4. It functions in the pathway amino-acid biosynthesis; L-valine biosynthesis; L-valine from pyruvate: step 2/4. Functionally, involved in the biosynthesis of branched-chain amino acids (BCAA). Catalyzes an alkyl-migration followed by a ketol-acid reduction of (S)-2-acetolactate (S2AL) to yield (R)-2,3-dihydroxy-isovalerate. In the isomerase reaction, S2AL is rearranged via a Mg-dependent methyl migration to produce 3-hydroxy-3-methyl-2-ketobutyrate (HMKB). In the reductase reaction, this 2-ketoacid undergoes a metal-dependent reduction by NADPH to yield (R)-2,3-dihydroxy-isovalerate. This Nitrosomonas eutropha (strain DSM 101675 / C91 / Nm57) protein is Ketol-acid reductoisomerase (NADP(+)).